The following is a 1183-amino-acid chain: MTSTGQDSSTRQRKSRHNPQSPLQDSSATLKRGGKKGAVPHSSPNLAEVKKKGKMKKLSQPAEEDLIVGLQGLDLNSETRVPVGTGLVFDEQLNDFHCLWDDSFPENPERLHAIKEQLILEGLLGRCVSFQARFAEKEELMLVHSLEYIDLMETTQYMNEGELRVLAGTYDSVYLHPNSYSCACLATGSVLRLVDAVMGAEIRNGMAVIRPPGHHAQRSLMDGYCMFNHLAVAARYAQKKHRIQRILIVDWDVHHGQGTQFIFDQDPSVLYFSIHRYEHGRFWPHLKASNWSTTGFGQGQGYTINVPWNQVSFCSHKLSLACFPRGSREMTDYYIAFLCLQVGMRDADYIAAFLHILLPVAFEFQPQLVLVAAGFDALHGDPKGEMSATPAGFAHLTHFLMGLAGGKLILSLEGGYNLHALAKGVSGSLHTLLGDPCPMLESPVAPCASAQTSISCTLEALEPFWEVLERSVEPQDEDEVEGDMLEDEEEEGHWEATALPMDTWPLLQNRTGLVYDERMMSHCNLWDNHHPETPQRILRIMCHLEEVGLAARCLILPARPALDSELLTCHSAEYVERLRATEKMKTRDLHREGANFESIYICPSTFACAQLATGAACRLVEAVLSGEVLNGIAIVRPPGHHAEPDAACGFCFFNSVAVAARHAQVIAGRALRILIVDWDVHHGNGTQHIFEEDPSVLYVSLHRYDRGTFFPMGDEGASSQVGRAAGTGFTVNVPWNGPRMGDADYLATWHRLVLPIAYEFNPELVLISAGFDAAQGDPLGGCQVTPEGYAHLTHLLMGLAGGRIILILEGGYNLTSISESMAACTHSLLGDPPPQLTSLRPPQSGALASISEVIQVHRKYWRSLRLMKMEDKEERSSSRLVIKKLPQSASPVSAKGMTTPKGKVLEAGMRKPTAALPTKESTLGQAKAKTAKALLAQGQSSEQAAKGTTLDLATSKDTVGGATTDQCASVAATENSANQTTSGEEASGETESFGTSPSSNASKQTTGASPLHGAAAQQSPELGLSSTLELSSEAQEVQESEEGLLGEAAGGQDMNSLMLTQGFGDFNTQDVFYAVTPLSWCPHLMAVCPIPAAGLDVSQPCKTCGSVQENWVCLTCYQVYCSRYVNAHMVCHHEASEHPLVLSCVDLSTWCYLCQAYVHHEDLQDVKNAAHQNKFGEGMPHLQ.

Residues M1–P61 form a disordered region. Residues N18–T29 are compositionally biased toward polar residues. Phosphoserine is present on S21. R32 carries the omega-N-methylarginine modification. The Nuclear export signal motif lies at L66–L75. Histone deacetylase stretches follow at residues G86–G434 and G512–G830. Catalysis depends on H215, which acts as the 1. The active-site 2 is H641. The interval A972–E1042 is disordered. Over residues T980–S996 the composition is skewed to low complexity. T990, T995, and T1005 each carry phosphothreonine. Residues P997–A1008 show a composition bias toward polar residues. The residue at position 1009 (S1009) is a Phosphoserine. Residues E1021–Q1035 show a composition bias toward low complexity. The UBP-type zinc-finger motif lies at S1079 to E1177. Zn(2+) is bound by residues C1081, H1083, C1101, C1104, C1113, C1116, and C1121. Residues S1122–Y1124 form a ubiquitin binding region. The Zn(2+) site is built by H1128, H1132, H1138, C1151, and C1154. The segment at W1150–Y1157 is ubiquitin binding.

Belongs to the histone deacetylase family. HD type 2 subfamily. As to quaternary structure, forms a trimeric complex in the nucleus consisting of BANP, HDAC6 and KHDRBS1/SAM68; HDAC6 keeps KHDRBS1 in a deacetylated state which inhibits the inclusion of CD44 alternate exons. The complex is disrupted by MAPK1/MAPK3-mediated phosphorylation of BANP which results in BANP export to the cytoplasm. This facilitates acetylation of KHDRBS1 and CD44 variant exon inclusion. Interacts with SIRT2 (via both phosphorylated, unphosphorylated, active or inactive forms); the interaction is necessary for the complex to interact with alpha-tubulin. Under proteasome impairment conditions, interacts with UBD via its histone deacetylase 1 and UBP-type zinc-finger regions. Interacts with BBIP1, CBFA2T3, CYLD, DDIT3/CHOP, ZMYND15, F-actin and HDAC11. Interacts with RIPOR2; this interaction occurs during early myogenic differentiation and prevents HDAC6 to deacetylate tubulin. Interacts with AURKA; AURKA-mediated phosphorylation of HDAC6 promotes deacetylation of alpha-tubulin. Interacts with DYSF; this interaction occurs during early myogenic differentiation. Interacts with TPPP; inhibiting the tubulin deacetylase activity of HDAC6. Interacts with DYNLL1. Interacts with ATP13A2; the interaction results in recruitment of HDAC6 to lysosomes to promote CTTN deacetylation. Interacts with CCDC141 (via the N-terminal region); inhibiting the deacetylase activity of HDAC6. Interacts with IPO7; the interaction facilitates HDAC6 nuclear translocation in dental papilla cells. The cofactor is Zn(2+). Post-translationally, phosphorylated by AURKA; phosphorylation increases HDAC6-mediated deacetylation of alpha-tubulin and subsequent disassembly of cilia. Ubiquitinated. Its polyubiquitination however does not lead to its degradation. In terms of processing, sumoylated in vitro.

The protein localises to the cytoplasm. It is found in the cytoskeleton. Its subcellular location is the nucleus. The protein resides in the perikaryon. It localises to the cell projection. The protein localises to the dendrite. It is found in the axon. Its subcellular location is the cilium. The protein resides in the microtubule organizing center. It localises to the centrosome. The protein localises to the cilium basal body. It catalyses the reaction N(6)-acetyl-L-lysyl-[protein] + H2O = L-lysyl-[protein] + acetate. The catalysed reaction is N(6)-acetyl-L-lysyl-[alpha-tubulin] + H2O = L-lysyl-[alpha-tubulin] + acetate. It participates in protein modification; protein ubiquitination. Functionally, deacetylates a wide range of non-histone substrates. Plays a central role in microtubule-dependent cell motility by mediating deacetylation of tubulin. Required for cilia disassembly via deacetylation of alpha-tubulin. Alpha-tubulin deacetylation results in destabilization of dynamic microtubules. Promotes deacetylation of CTTN, leading to actin polymerization, promotion of autophagosome-lysosome fusion and completion of autophagy. Deacetylates SQSTM1. Deacetylates peroxiredoxins PRDX1 and PRDX2, decreasing their reducing activity. Deacetylates antiviral protein RIGI in the presence of viral mRNAs which is required for viral RNA detection by RIGI. Sequentially deacetylates and polyubiquitinates DNA mismatch repair protein MSH2 which leads to MSH2 degradation, reducing cellular sensitivity to DNA-damaging agents and decreasing cellular DNA mismatch repair activities. Deacetylates DNA mismatch repair protein MLH1 which prevents recruitment of the MutL alpha complex (formed by the MLH1-PMS2 heterodimer) to the MutS alpha complex (formed by the MSH2-MSH6 heterodimer), leading to tolerance of DNA damage. Deacetylates RHOT1/MIRO1 which blocks mitochondrial transport and mediates axon growth inhibition. Deacetylates transcription factor SP1 which leads to increased expression of ENG, positively regulating angiogenesis. Deacetylates KHDRBS1/SAM68 which regulates alternative splicing by inhibiting the inclusion of CD44 alternate exons. Promotes odontoblast differentiation following IPO7-mediated nuclear import and subsequent repression of RUNX2 expression. In addition to its protein deacetylase activity, plays a key role in the degradation of misfolded proteins: when misfolded proteins are too abundant to be degraded by the chaperone refolding system and the ubiquitin-proteasome, mediates the transport of misfolded proteins to a cytoplasmic juxtanuclear structure called aggresome. Probably acts as an adapter that recognizes polyubiquitinated misfolded proteins and targets them to the aggresome, facilitating their clearance by autophagy. The polypeptide is Protein deacetylase HDAC6 (Rattus norvegicus (Rat)).